Here is a 348-residue protein sequence, read N- to C-terminus: NADH-quinone oxidoreductase subunit H (348 aa).

8 helical membrane-spanning segments follow: residues 21 to 41 (IIGI…IIYA), 87 to 107 (GLFL…WAVI), 120 to 140 (IGLL…IIAG), 166 to 186 (IGFV…SAIV), 193 to 213 (IFGF…AVVF), 258 to 278 (NVIL…LPPV), 283 to 303 (LYMV…FFVF), and 323 to 343 (WKVF…WLML).

This sequence belongs to the complex I subunit 1 family. NDH-1 is composed of 14 different subunits. Subunits NuoA, H, J, K, L, M, N constitute the membrane sector of the complex.

It is found in the cell inner membrane. It catalyses the reaction a quinone + NADH + 5 H(+)(in) = a quinol + NAD(+) + 4 H(+)(out). NDH-1 shuttles electrons from NADH, via FMN and iron-sulfur (Fe-S) centers, to quinones in the respiratory chain. The immediate electron acceptor for the enzyme in this species is believed to be ubiquinone. Couples the redox reaction to proton translocation (for every two electrons transferred, four hydrogen ions are translocated across the cytoplasmic membrane), and thus conserves the redox energy in a proton gradient. This subunit may bind ubiquinone. The chain is NADH-quinone oxidoreductase subunit H from Rhizorhabdus wittichii (strain DSM 6014 / CCUG 31198 / JCM 15750 / NBRC 105917 / EY 4224 / RW1) (Sphingomonas wittichii).